Reading from the N-terminus, the 482-residue chain is MQFNVAIMTKRTFGVIGLAVMGENLALNVESRGFPIAVFNRSPNKTEKFMAERAVGKDIKAAYTVEEFVQLLERPRKILVMVKAGGPVDAVINELKPLLEEGDMIIDGGNSLYEDTERRTKDLEATGLGFVGMGVSGGEEGALLGPSLMPGGTPAAYKELEPILTKIAAQVEDPDNPACVTFIGPGGAGHYVKMVHNGIEYGDMQLIAEAYDILKNGLGLSNEQLHEVFGQWNQTDELNSFLIEISTDIFAKKDPETGGHLIDYILDAAGQKGTGRWTVMSGLELGVPIPTIYAAVNARVMSSLKEERVAASGQLSGPSKTFSGDVEAWIPKVRDALYCSKMCSYAQGMALIAKASQEFGYDVNLPEIARIWKGGCIIRAGFLDKIKKAFKDNPQLPNLLLAPEFKQSILDRQGPWREVLMLANEMGIAVPAFSSSLDYFDSYRRAVLPQNLTQAQRDYFGAHTYERTDKPRGEFFHTEWLD.

NADP(+) is bound by residues 17-22 (GLAVMG), 40-42 (NRS), 82-84 (VKA), and Asn-110. Residues Asn-110 and 136 to 138 (SGG) contribute to the substrate site. Lys-193 serves as the catalytic Proton acceptor. 196-197 (HN) provides a ligand contact to substrate. Glu-200 acts as the Proton donor in catalysis. Tyr-201, Lys-272, Arg-299, Arg-457, and His-463 together coordinate substrate.

It belongs to the 6-phosphogluconate dehydrogenase family. As to quaternary structure, homodimer.

It carries out the reaction 6-phospho-D-gluconate + NADP(+) = D-ribulose 5-phosphate + CO2 + NADPH. It functions in the pathway carbohydrate degradation; pentose phosphate pathway; D-ribulose 5-phosphate from D-glucose 6-phosphate (oxidative stage): step 3/3. Catalyzes the oxidative decarboxylation of 6-phosphogluconate to ribulose 5-phosphate and CO(2), with concomitant reduction of NADP to NADPH. The sequence is that of 6-phosphogluconate dehydrogenase, decarboxylating (gnd) from Synechocystis sp. (strain ATCC 27184 / PCC 6803 / Kazusa).